The sequence spans 102 residues: Small ribosomal subunit protein eS24 (102 aa).

The interval 70 to 102 is disordered; that stretch reads VYDSPAQAAEVEHDHMLERNKIGADDADAEEAE. A compositionally biased stretch (basic and acidic residues) spans 79 to 93; it reads EVEHDHMLERNKIGA.

Belongs to the eukaryotic ribosomal protein eS24 family.

The sequence is that of Small ribosomal subunit protein eS24 from Halobacterium salinarum (strain ATCC 29341 / DSM 671 / R1).